The chain runs to 479 residues: Ammonium transporter Rh type C (479 aa).

Over 1–9 the chain is Cytoplasmic; sequence MAWNTNLRW. A helical membrane pass occupies residues 10–30; sequence RLPLTCLLLQVVMVILFGVFV. Residues 31–60 are Extracellular-facing; it reads RYDFEADAHWWSERTHKNLSDVENEFYYRY. N-linked (GlcNAc...) asparagine glycosylation is present at asparagine 48. Residues 61–81 traverse the membrane as a helical segment; sequence PSFQDVHVMVFVGFGFLMTFL. At 82–85 the chain is on the cytoplasmic side; it reads QRYG. A helical transmembrane segment spans residues 86-106; it reads FSAVGFNFLLAAFGIQWALLM. Over 107-123 the chain is Extracellular; the sequence is QGWFHFLQGRYIVVGVE. A helical membrane pass occupies residues 124-144; that stretch reads NLINADFCVASVCVAFGAVLG. The Cytoplasmic portion of the chain corresponds to 145–148; it reads KVSP. Residues 149–169 traverse the membrane as a helical segment; the sequence is IQLLIMTFFQVTLFAVNEFIL. At 170–177 the chain is on the extracellular side; that stretch reads LNLLKVKD. The chain crosses the membrane as a helical span at residues 178–200; the sequence is AGGSMTIHTFGAYFGLTVTRILY. At 201 to 218 the chain is on the cytoplasmic side; it reads RRNLEQSKERQNSVYQSD. A helical transmembrane segment spans residues 219–239; the sequence is LFAMIGTLFLWMYWPSFNSAI. The Extracellular segment spans residues 240–250; the sequence is SYHGDSQHRAA. A helical membrane pass occupies residues 251–271; sequence INTYCSLAACVLTSVAISSAL. Residues 272-281 lie on the Cytoplasmic side of the membrane; sequence HKKGKLDMVH. The chain crosses the membrane as a helical span at residues 282-302; the sequence is IQNATLAGGVAVGTAAEMMLM. Proline 303 is a topological domain (extracellular). The helical transmembrane segment at 304–324 threads the bilayer; it reads YGALIIGFVCGIISTLGFVYL. Topologically, residues 325 to 345 are cytoplasmic; the sequence is TPFLESRLHIQDTCGINNLHG. A helical transmembrane segment spans residues 346-366; it reads IPGIIGGIVGAVTAASASLEV. Over 367 to 394 the chain is Extracellular; the sequence is YGKEGLVHSFDFQGFKGDWTARTQGKFQ. Residues 395-415 form a helical membrane-spanning segment; the sequence is IYGLLVTLAMALMGGIIVGLI. Over 416-479 the chain is Cytoplasmic; sequence LRLPFWGQPS…PMASSVPLVP (64 aa).

The protein belongs to the ammonium transporter (TC 2.A.49) family. Rh subfamily. As to quaternary structure, homotrimer. Post-translationally, N-glycosylated.

Its subcellular location is the cell membrane. It localises to the apical cell membrane. It catalyses the reaction NH4(+)(in) = NH4(+)(out). The catalysed reaction is methylamine(out) = methylamine(in). The enzyme catalyses CO2(out) = CO2(in). Its function is as follows. Ammonium transporter involved in the maintenance of acid-base homeostasis. Transports ammonium and its related derivative methylammonium across the plasma membrane of epithelial cells likely contributing to renal transepithelial ammonia transport and ammonia metabolism. Postulated to primarily mediate an electroneutral bidirectional transport of NH3 ammonia species according to a mechanism that implies interaction of an NH4(+) ion with acidic residues of the pore entry followed by dissociation of NH4(+) into NH3 and H(+). As a result NH3 transits through the central pore and is protonated on the extracellular side reforming NH4(+). May act as a CO2 channel providing for renal acid secretion. This Pan troglodytes (Chimpanzee) protein is Ammonium transporter Rh type C (RHCG).